Reading from the N-terminus, the 835-residue chain is Protein translocase subunit SecA 1 (835 aa).

Residues Gln85, 103–107 (GEGKT), and Asp492 contribute to the ATP site. Residues 788-807 (VQGEAVHPSSDGEEAKKKPV) are disordered. Zn(2+) is bound by residues Cys819, Cys821, Cys830, and Cys831.

It belongs to the SecA family. In terms of assembly, monomer and homodimer. Part of the essential Sec protein translocation apparatus which comprises SecA, SecYEG and auxiliary proteins SecDF. Other proteins may also be involved. Zn(2+) is required as a cofactor.

Its subcellular location is the cell membrane. The protein localises to the cytoplasm. The catalysed reaction is ATP + H2O + cellular proteinSide 1 = ADP + phosphate + cellular proteinSide 2.. Its function is as follows. Part of the Sec protein translocase complex. Interacts with the SecYEG preprotein conducting channel. Has a central role in coupling the hydrolysis of ATP to the transfer of proteins into and across the cell membrane, serving as an ATP-driven molecular motor driving the stepwise translocation of polypeptide chains across the membrane. The sequence is that of Protein translocase subunit SecA 1 from Bacillus thuringiensis subsp. konkukian (strain 97-27).